The following is a 712-amino-acid chain: Eukaryotic translation initiation factor 3 subunit B (712 aa).

Residues 1–98 (MSLTEAEYHE…LFVQFETSEM (98 aa)) form a sufficient for interaction with HCR1 and TIF32 region. The segment at 1-224 (MSLTEAEYHE…GVQSWGGADF (224 aa)) is sufficient for interaction with PIC8. An RRM domain is found at 37–124 (NYVVVDGAPI…HRLLVNRLSD (88 aa)). WD repeat units follow at residues 191–229 (RKFF…SIDK), 230–293 (FMHN…RTFA), 301–339 (QKEM…LLDK), 342–384 (IKID…QTAR), 452–493 (ELKE…DFYA), 513–555 (ITDK…SNKN), and 566–604 (DKFS…YEFT).

The protein belongs to the eIF-3 subunit B family. In terms of assembly, component of the eukaryotic translation initiation factor 3 (eIF-3) complex.

The protein resides in the cytoplasm. RNA-binding component of the eukaryotic translation initiation factor 3 (eIF-3) complex, which is involved in protein synthesis of a specialized repertoire of mRNAs and, together with other initiation factors, stimulates binding of mRNA and methionyl-tRNAi to the 40S ribosome. The eIF-3 complex specifically targets and initiates translation of a subset of mRNAs involved in cell proliferation. This chain is Eukaryotic translation initiation factor 3 subunit B, found in Scheffersomyces stipitis (strain ATCC 58785 / CBS 6054 / NBRC 10063 / NRRL Y-11545) (Yeast).